The primary structure comprises 371 residues: Cytochrome b (371 aa).

4 helical membrane passes run 25-45 (FGSM…FLAI), 69-90 (WIMQ…YIHI), 105-125 (WLSG…GYVL), and 170-190 (FCAL…IHII). Heme b contacts are provided by H75 and H89. Heme b contacts are provided by H174 and H188. H193 is a binding site for a ubiquinone. Helical transmembrane passes span 218-238 (YKDF…LSVS), 280-300 (LGGT…PFTH), 312-332 (LSQT…WTAT), and 339-358 (FITI…IMNP).

This sequence belongs to the cytochrome b family. In terms of assembly, the cytochrome bc1 complex contains 3 respiratory subunits (MT-CYB, CYC1 and UQCRFS1), 2 core proteins (UQCRC1 and UQCRC2) and probably 6 low-molecular weight proteins. It depends on heme b as a cofactor.

It is found in the mitochondrion inner membrane. Functionally, component of the ubiquinol-cytochrome c reductase complex (complex III or cytochrome b-c1 complex) that is part of the mitochondrial respiratory chain. The b-c1 complex mediates electron transfer from ubiquinol to cytochrome c. Contributes to the generation of a proton gradient across the mitochondrial membrane that is then used for ATP synthesis. The chain is Cytochrome b (MT-CYB) from Micrurus tener microgalbineus (Spotted coral snake).